The following is a 184-amino-acid chain: Cyclin-dependent kinase inhibitor 1 (184 aa).

The span at 85-98 shows a compositional bias: low complexity; it reads ISSTTLTPLSSPST. Positions 85–184 are disordered; it reads ISSTTLTPLS…IRTRSSCSPY (100 aa).

It belongs to the CDI family. As to quaternary structure, interacts with cyd-1; the interaction is direct. As to expression, in embryos, expression is first seen in pharyngeal primordium and later in all differentiating cells. Post embryonic expression corresponds to developmental patterns of cell cycle progression in many tissues including sex myoblasts, distal tip cells, vulval cells, seam cells, neurons, intestine cells and hypodermal cells.

It is found in the nucleus. Functionally, negative cell-cycle regulator that functions at the G1-to-S-phase transition. Required for suspension of the cell cycle in dauer larvae and starved L1 larvae. In vulval precursor cells (VPCs), a pathway of heterochronic genes acts via cki-1 to maintain VPCs in G1 during the L2 larval stage. Cul-2 may function in ubiquitin-mediated degradation by targeting cki-1 for degradation. Involved in distal tip cell development by repressing and modulating cye-1/cdk-2 activity levels in Z1.aa/Z4.pp and in Z1.ap/Z4.pa. In Caenorhabditis elegans, this protein is Cyclin-dependent kinase inhibitor 1.